The following is a 149-amino-acid chain: Large ribosomal subunit protein bL9 (149 aa).

The protein belongs to the bacterial ribosomal protein bL9 family.

Functionally, binds to the 23S rRNA. The protein is Large ribosomal subunit protein bL9 of Helicobacter pylori (strain J99 / ATCC 700824) (Campylobacter pylori J99).